The sequence spans 320 residues: Homoserine kinase (320 aa).

100–110 contributes to the ATP binding site; that stretch reads PLSSGMGSSAA.

This sequence belongs to the GHMP kinase family. Homoserine kinase subfamily.

The protein resides in the cytoplasm. The catalysed reaction is L-homoserine + ATP = O-phospho-L-homoserine + ADP + H(+). It participates in amino-acid biosynthesis; L-threonine biosynthesis; L-threonine from L-aspartate: step 4/5. Functionally, catalyzes the ATP-dependent phosphorylation of L-homoserine to L-homoserine phosphate. The protein is Homoserine kinase of Chlorobium phaeobacteroides (strain BS1).